Here is a 494-residue protein sequence, read N- to C-terminus: Tripartite motif-containing protein 5 (494 aa).

At Ala-2 the chain carries N-acetylalanine. The RING-type zinc-finger motif lies at Cys-15 to Arg-59. Residues Gln-91–Val-132 form a B box-type zinc finger. Residues Cys-96, His-99, Cys-118, and His-124 each contribute to the Zn(2+) site. A coiled-coil region spans residues Val-132–Val-223. The interval Phe-186–Asn-199 is required for interaction with GABARAP and for autophagy. Positions Pro-280–Ser-494 constitute a B30.2/SPRY domain.

It belongs to the TRIM/RBCC family. In terms of assembly, can form homodimers and homotrimers. In addition to lower-order dimerization, also exhibits a higher-order multimerization and both low- and high-order multimerizations are essential for its restriction activity. Interacts with BTBD1 and BTBD2. Interacts with PSMC4, PSMC5, PSMD7 and HSPA8/HSC70. Interacts (via B30.2/SPRY domain) with HSPA1A/B. Interacts with PSMC2, MAP3K7/TAK1, TAB2 and TAB3. Interacts with SQSTM1. Interacts with TRIM6 and TRIM34. Interacts with ULK1 (phosphorylated form), GABARAP, GABARAPL1, GABARAPL2, MAP1LC3A, MAP1LC3C and BECN1. In terms of processing, degraded in a proteasome-independent fashion in the absence of viral infection but in a proteasome-dependent fashion following exposure to restriction sensitive virus. Autoubiquitinated in a RING finger- and UBE2D2-dependent manner. Monoubiquitinated by TRIM21. Deubiquitinated by Yersinia YopJ. Ubiquitination may not lead to proteasomal degradation.

It localises to the cytoplasm. The protein resides in the nucleus. The enzyme catalyses S-ubiquitinyl-[E2 ubiquitin-conjugating enzyme]-L-cysteine + [acceptor protein]-L-lysine = [E2 ubiquitin-conjugating enzyme]-L-cysteine + N(6)-ubiquitinyl-[acceptor protein]-L-lysine.. The protein operates within protein modification; protein ubiquitination. Functionally, capsid-specific restriction factor that prevents infection from non-host-adapted retroviruses. Blocks viral replication early in the life cycle, after viral entry but before reverse transcription. In addition to acting as a capsid-specific restriction factor, also acts as a pattern recognition receptor that activates innate immune signaling in response to the retroviral capsid lattice. Binding to the viral capsid triggers its E3 ubiquitin ligase activity, and in concert with the heterodimeric ubiquitin conjugating enzyme complex UBE2V1-UBE2N (also known as UBC13-UEV1A complex) generates 'Lys-63'-linked polyubiquitin chains, which in turn are catalysts in the autophosphorylation of the MAP3K7/TAK1 complex (includes TAK1, TAB2, and TAB3). Activation of the MAP3K7/TAK1 complex by autophosphorylation results in the induction and expression of NF-kappa-B and MAPK-responsive inflammatory genes, thereby leading to an innate immune response in the infected cell. Restricts infection by simian immunodeficiency virus (SIV-mac). Plays a role in regulating autophagy through activation of autophagy regulator BECN1 by causing its dissociation from its inhibitors BCL2 and TAB2. The chain is Tripartite motif-containing protein 5 (TRIM5) from Saimiri sciureus (Common squirrel monkey).